A 409-amino-acid chain; its full sequence is Isocitrate dehydrogenase [NADP] 1 (409 aa).

Positions 75, 78, 80, and 85 each coordinate NADP(+). Positions 255, 278, and 282 each coordinate Mn(2+). Residues glycine 313, threonine 314, valine 315, histidine 318, and asparagine 331 each contribute to the NADP(+) site.

Belongs to the isocitrate and isopropylmalate dehydrogenases family. Homodimer. It depends on Mg(2+) as a cofactor. Mn(2+) serves as cofactor.

It catalyses the reaction D-threo-isocitrate + NADP(+) = 2-oxoglutarate + CO2 + NADPH. Catalyzes the oxidative decarboxylation of isocitrate to 2-oxoglutarate and carbon dioxide with the concomitant reduction of NADP(+). The protein is Isocitrate dehydrogenase [NADP] 1 (icd) of Mycobacterium bovis (strain ATCC BAA-935 / AF2122/97).